We begin with the raw amino-acid sequence, 240 residues long: Bidirectional sugar transporter SWEET7c (240 aa).

The Extracellular portion of the chain corresponds to 1–12; that stretch reads MVSPDLIRNVVG. Residues 10–48 form the MtN3/slv 1 domain; it reads VVGIVGNVISFGLFLSPVPIFWWIIKNKNVQNFKADPIL. A helical membrane pass occupies residues 13 to 33; the sequence is IVGNVISFGLFLSPVPIFWWI. At 34 to 46 the chain is on the cytoplasmic side; it reads IKNKNVQNFKADP. Residues 47–67 traverse the membrane as a helical segment; sequence ILVVTINGISLVIEAVYLTIF. At 68–78 the chain is on the extracellular side; that stretch reads FLFSDKKNKKK. Residues 79–99 traverse the membrane as a helical segment; the sequence is MGVVLATEALFMAAVAVGVLL. Over 100–108 the chain is Cytoplasmic; the sequence is GAHTHQRRS. The helical transmembrane segment at 109-129 threads the bilayer; it reads LIVGILCVIFGTIMYSSPLTI. The MtN3/slv 2 domain maps to 110 to 191; sequence IVGILCVIFG…LILYAIYYRT (82 aa). Residues 130–140 are Extracellular-facing; it reads MVVKTKSVEYM. Residues 141–161 form a helical membrane-spanning segment; it reads PLLLSVVSFLNGLCWTLYALI. The Cytoplasmic portion of the chain corresponds to 162 to 164; it reads RFD. The chain crosses the membrane as a helical span at residues 165-185; sequence IFITIPNGLGVLFAIMQLILY. The Extracellular portion of the chain corresponds to 186–240; it reads AIYYRTTPKKQDKNLELPTVAPIAKDTSIVAPVGNDDDVNGSTASHATINITIEP. Asparagine 225 and asparagine 235 each carry an N-linked (GlcNAc...) asparagine glycan.

This sequence belongs to the SWEET sugar transporter family. As to quaternary structure, forms homooligomers and/or heterooligomers.

The protein localises to the cell membrane. Functionally, mediates both low-affinity uptake and efflux of sugar across the plasma membrane. In Oryza sativa subsp. indica (Rice), this protein is Bidirectional sugar transporter SWEET7c (SWEET7C).